A 473-amino-acid chain; its full sequence is Cysteine--tRNA ligase (473 aa).

Cys-28 contacts Zn(2+). The 'HIGH' region motif lies at 30-40 (MTVYDYCHLGH). Zn(2+) contacts are provided by Cys-209, His-234, and Glu-238. A 'KMSKS' region motif is present at residues 282-286 (KMSKS). Residue Lys-285 participates in ATP binding.

Belongs to the class-I aminoacyl-tRNA synthetase family. As to quaternary structure, monomer. Zn(2+) is required as a cofactor.

The protein localises to the cytoplasm. It carries out the reaction tRNA(Cys) + L-cysteine + ATP = L-cysteinyl-tRNA(Cys) + AMP + diphosphate. The sequence is that of Cysteine--tRNA ligase from Neisseria gonorrhoeae (strain ATCC 700825 / FA 1090).